We begin with the raw amino-acid sequence, 315 residues long: WD repeat domain-containing protein 83 (315 aa).

WD repeat units follow at residues Cys23–Thr62, Gly65–Lys104, Gly107–Val146, Glu151–Asp188, Val190–Glu228, Gly231–Ala272, and Val275–Gly313.

This sequence belongs to the WD repeat MORG1 family. In terms of assembly, interacts with EGLN3/PHD3. Interacts with ERK signaling proteins MAP2K1/MEK1, MAP2K2/MEK2, LAMTOR3, ARAF/Raf-1, MAPK1/ERK2 and MAPK3/ERK1. Identified in the spliceosome C complex. Interacts with PARD6B and CRB3. Interacts strongly with GTP-bound RRAGA but not with inactive GDP-bound. Interacts with p62/SQSTM1. Ubiquitous.

The protein localises to the cytoplasm. It localises to the lysosome. It is found in the nucleus. Functionally, molecular scaffold protein for various multimeric protein complexes. Acts as a module in the assembly of a multicomponent scaffold for the ERK pathway, linking ERK responses to specific agonists. At low concentrations it enhances ERK activation, whereas high concentrations lead to the inhibition of ERK activation. Also involved in response to hypoxia by acting as a negative regulator of HIF1A/HIF-1-alpha via its interaction with EGLN3/PHD3. May promote degradation of HIF1A. May act by recruiting signaling complexes to a specific upstream activator. May also be involved in pre-mRNA splicing. Participates in tight junction development by regulating apico-basal polarity, a key step in tissue development and organization. Mechanistically, regulates the translocation of PAR6-aPKC from the cytoplasm to the apical surface by acting as an adapter between PARD6B AND CRB3. Also acts as a negative regulator of mTORC1 under nutrient-rich conditions by binding to the active Rag GTPases to inhibit mTORC1 localization to the lysosome and phosphorylation of downstream targets. This facilitates constitutive basal autophagy during nutrient availability. In Mus musculus (Mouse), this protein is WD repeat domain-containing protein 83 (Wdr83).